A 227-amino-acid polypeptide reads, in one-letter code: Testis expressed protein 56 (227 aa).

Expressed predominantly in the testis.

The sequence is that of Testis expressed protein 56 from Mus musculus (Mouse).